Here is a 150-residue protein sequence, read N- to C-terminus: Copper transporter 3 (150 aa).

The next 2 helical transmembrane spans lie at 50-70 (GGMY…LEFL) and 100-120 (LAYL…LAAV).

Belongs to the copper transporter (Ctr) (TC 1.A.56) family. SLC31A subfamily.

The protein localises to the membrane. Its function is as follows. Involved in the transport of copper. This is Copper transporter 3 (COPT3) from Oryza sativa subsp. japonica (Rice).